The primary structure comprises 1378 residues: MCDMLDNKLGNRLRVDFSNISKQIEIPNLLQLQKKSFDYFLNLDNGESGIEKVFKSIFPIHDPQNRLSLEYVSSEIGKPKYTIRECMERGLTYSVNLKMKIRLTLHEKDEKTGEKVGVKDIKEQEIYIREIPLMTDRVSFIINGVERVVVNQLHRSPGVIFKEEESSTVANKLVYTAQIIPDRGSWLYFEYDAKDVLYVRINKRRKVPVTMLFRALGYKKQDIIKLFYPIQTIHVKKDKFLTEFNPNDFMDRIEYDIKDEKGKIVHQAGKRLTKKKAEQLIKDGLKWIEYPVEILLNRYLANPIIDKESGEVLFDSLTLLDESKLAKIKEQKSFDIANDLANGVDAAIINSFAQDGETLKLLKQSENIDDENDLAAIRIYKVMRPGEPVVKDAAKAFVNDLFFNPERYDLTKVGRMKMNHKLGLEVPEYVTVLTNEDIIKTAKYLIKVKNGKGHIDDRDHLGNRRIRSIGELLANELHLGLAKMQKAIRDKFTSLNADLDKVMPYDLINPKMITTTIIEFFTGGQLSQFMDQTNPLSEVTHKRRLSALGEGGLVKERAGFEVRDVHATHYGRICPVETPEGQNIGLINTLSTYAKVNELGFVEAPYRKVVNGKVTNEVVYLTATQEEGLFIAPASTKVDAKGNIVEEFVEARQDGETILARREEVQLIDLCSGMVVGVAASLIPFLEHDDANRALMGSNMQRQAVPLLTASAPIVGTGMEQIIARDAWEAVKAKRGGVVEKVDNKSIFILGEDDKGPFIDHYTMEKNLRTNQNTNYIQHPIVKKGDIVKAGQIIADGPSMDQGELAIGKNALIAFMPWNGYNYEDAIVVSERIIREDTFTSVHIYEKEIEARELKDGIEEITKDIPNVKEEDVAHLDESGIAKIGTHIKPGMILVGKVSPKGEVKPTPEERLLRAIFGEKAGHVVNKSLYATASLEGVVVDVKIFTKKGYEKDDRAIKSYDKEKMALEKEHHDRLLMMDREEMLRVCALLSKAPLNSDQKIGDKNYKKGQTADISELEKINRFTLTTLIKAYSKEIQKEYDDLKNHFQNEKKKLKAEHDEKLEILEKDDILPSGVIKLVKVYIATKRKLKVGDKMAGRHGNKGIVSTIVPEVDMPYLPNGKSVDIALNPLGVPSRMNIGQILESHLGLIGLRLGDQIQEIFDRRQKDFLKELRAKMLEICSIPRLASEKEFIKSLSDEELLNYARDWSKGVKFATPVFEGVNIEEFSKLFEMAKIDMDGKTELYDGRTGEKIAERVHVGCMYMLKLHHLVDEKVHARSTGPYSLVTQQPVGGKALFGGQRFGEMEVWALEAYGAAHTLREMLTIKSDDVEGRFSAYKALTKGENVPATGIPETFFVLTNELKSLALDVEIFDKDEDNE.

Belongs to the RNA polymerase beta chain family. The RNAP catalytic core consists of 2 alpha, 1 beta, 1 beta' and 1 omega subunit. When a sigma factor is associated with the core the holoenzyme is formed, which can initiate transcription.

The enzyme catalyses RNA(n) + a ribonucleoside 5'-triphosphate = RNA(n+1) + diphosphate. In terms of biological role, DNA-dependent RNA polymerase catalyzes the transcription of DNA into RNA using the four ribonucleoside triphosphates as substrates. The chain is DNA-directed RNA polymerase subunit beta from Campylobacter jejuni subsp. jejuni serotype O:23/36 (strain 81-176).